The sequence spans 163 residues: MAKLVEKFYSIMGLGDEIEEMNDASVAPHSGEERESAFSRRSAERAERTERPTAPVVSLVTERQKKELKVVVCEPKTFDEARAIADHLKNRRQVILNLEKADREMAQRVIDFISGTTYALNGSMQKVGANIFVFAPSNVDISGEVTGDDLSSVRSPLAWANKG.

Positions 25 to 53 are disordered; the sequence is SVAPHSGEERESAFSRRSAERAERTERPT. Over residues 30–51 the composition is skewed to basic and acidic residues; the sequence is SGEERESAFSRRSAERAERTER.

Belongs to the SepF family. In terms of assembly, homodimer. Interacts with FtsZ.

It localises to the cytoplasm. Cell division protein that is part of the divisome complex and is recruited early to the Z-ring. Probably stimulates Z-ring formation, perhaps through the cross-linking of FtsZ protofilaments. Its function overlaps with FtsA. This Heliobacterium modesticaldum (strain ATCC 51547 / Ice1) protein is Cell division protein SepF.